The sequence spans 252 residues: MTDAILQVSDLSVYYNKKKALNSVSLSFQPKEITALIGPSGSGKSTLLKSLNRMGDLNPEVTTTGSVVYNGHNIYSPRTDTVELRKEIGMVFQQPNPFPMTIYENVVYGLRINGIKDKQVLDEAVEKALQGASIWDEVKDRLYDSAIGLSGGQQQRVCVARVLATSPKIILLDEPTSALDPISAGKIEETLYGLKDKYTMLLVTRSMQQASRISDKTGFFLDGDLIEFNDTKQMFLDPQHKETEDYITGKFG.

Residues 6-247 (LQVSDLSVYY…PQHKETEDYI (242 aa)) form the ABC transporter domain. 38-45 (GPSGSGKS) contacts ATP.

It belongs to the ABC transporter superfamily. Phosphate importer (TC 3.A.1.7) family. In terms of assembly, the complex is composed of two ATP-binding proteins (PstB), two transmembrane proteins (PstC and PstA) and a solute-binding protein (PstS).

It is found in the cell membrane. The enzyme catalyses phosphate(out) + ATP + H2O = ADP + 2 phosphate(in) + H(+). Part of the ABC transporter complex PstSACB involved in phosphate import. Responsible for energy coupling to the transport system. The polypeptide is Phosphate import ATP-binding protein PstB 1 (Streptococcus pneumoniae (strain ATCC BAA-255 / R6)).